Here is a 289-residue protein sequence, read N- to C-terminus: Complement C1q tumor necrosis factor-related protein 7 (289 aa).

A signal peptide spans 1–16 (MIVLLYVTSLAICASG). Residues 36 to 134 (IPGLPGPPGP…GDRGDQGDPG (99 aa)) form a disordered region. The region spanning 38 to 139 (GLPGPPGPPG…QGDPGLPGVC (102 aa)) is the Collagen-like domain. Positions 48–61 (ANGSPGPHGRIGLP) are enriched in low complexity. A compositionally biased stretch (basic and acidic residues) spans 63–76 (RDGRDGRKGEKGEK). Over residues 78–91 (TAGLKGKTGPLGLA) the composition is skewed to low complexity. Residues 93-102 (EKGDQGETGK) are compositionally biased toward basic and acidic residues. Positions 143 to 279 (SIVLKSAFSV…GFLLYVDTDY (137 aa)) constitute a C1q domain.

The protein localises to the secreted. In Mus musculus (Mouse), this protein is Complement C1q tumor necrosis factor-related protein 7 (C1qtnf7).